Reading from the N-terminus, the 348-residue chain is Small ribosomal subunit protein mS45 (348 aa).

The span at 37–57 (SCSSSSPQSSQPTTHQQQCSS) shows a compositional bias: low complexity. A disordered region spans residues 37 to 63 (SCSSSSPQSSQPTTHQQQCSSFSTTAP).

Belongs to the mitochondrion-specific ribosomal protein mS45 family. Component of the mitochondrial small ribosomal subunit (mt-SSU). Mature N.crassa 74S mitochondrial ribosomes consist of a small (37S) and a large (54S) subunit. The 37S small subunit contains a 16S ribosomal RNA (16S mt-rRNA) and 32 different proteins. The 54S large subunit contains a 23S rRNA (23S mt-rRNA) and 42 different proteins.

It localises to the mitochondrion. In terms of biological role, component of the mitochondrial ribosome (mitoribosome), a dedicated translation machinery responsible for the synthesis of mitochondrial genome-encoded proteins, including at least some of the essential transmembrane subunits of the mitochondrial respiratory chain. The mitoribosomes are attached to the mitochondrial inner membrane and translation products are cotranslationally integrated into the membrane. The polypeptide is Small ribosomal subunit protein mS45 (mrps35) (Neurospora crassa (strain ATCC 24698 / 74-OR23-1A / CBS 708.71 / DSM 1257 / FGSC 987)).